We begin with the raw amino-acid sequence, 1029 residues long: MHRASLICRLASPSRINAIRNASSGKSHISASTLVQHRNQSVAAAVKHEPFLNGSSSIYIEQMYEAWLQDPSSVHTSWDAYFRNVEAGAGPGQAFQAPPATAYAGALGVSPAAAQVTTSSAPATRLDTNASVQSISDHLKIQLLIRSYQTRGHNIADLDPLGINSADLDDTIPPELELSFYGLGERDLDREFLLPPTTFISEKKSLTLREILQRLKDIYCTSTGVEYMHLNNLEQQDWIRRRFEAPRVTELSHDQKKVLFKRLIRSTKFEEFLAKKWPSEKRFGLEGCEVLIPAMKQVIDSSSTLGVDSFVIGMPHRGRLNVLANVCRQPLATILSQFSTLEPADEGSGDVKYHLGVCIERLNRQSQKNVKIAVVANPSHLEAVDPVVMGKVRAEAFYAGDEKCDRTMAILLHGDAAFAGQGVVLETFNLDDLPSYTTHGAIHIVVNNQIGFTTDPRSSRSSPYCTDVGRVVGCPIFHVNVDDPEAVMHVCNVAADWRKTFKKDVIVDLVCYRRHGHNELDEPMFTQPLMYQRIKQTKTALEKYQEKILNEGVANEQYVKEELTKYGSILEDAYENAQKVTYVRNRDWLDSPWDDFFKKRDPLKLPSTGIEQENIEQIIGKFSQYPEGFNLHRGLERTLKGRQQMLKDNSLDWACGEALAFGSLLKEGIHVRLSGQDVQRGTFSHRHHVLHDQKVDQKIYNPLNDLSEGQGEYTVCNSSLSEYAVLGFELGYSMVDPNSLVIWEAQFGDFSNTAQCIIDQFISSGQSKWIRQSGLVMLLPHGYEGMGPEHSSARPERFLQMCNEDDEIDLEKIAFEGTFEAQQLHDTNWIVANCTTPANIYHLLRRQVTMPFRKPAVVFSPKSLLRHPMARSPVEDFQSGSNFQRVIPETGAPSQNPPDVKRVVFCTGKVYYDMVAARKHVGKENDVALVRVEQLSPFPYDLVQQECRKYQGAEILWAQEEHKNMGAWSFVQPRINSLLSIDGRATKYAGRLPSSSPATGNKFTHMQEQKEMMSKVFGVPKSKLEGFKA.

Residues R317, D415, N448, I450, and Q676 each coordinate thiamine diphosphate. The Mg(2+) site is built by D415, N448, and I450.

The protein belongs to the alpha-ketoglutarate dehydrogenase family. As to quaternary structure, homodimer. Component of the 2-oxoglutarate dehydrogenase complex. The cofactor is thiamine diphosphate. Mg(2+) is required as a cofactor.

It localises to the mitochondrion matrix. The enzyme catalyses N(6)-[(R)-lipoyl]-L-lysyl-[protein] + 2-oxoglutarate + H(+) = N(6)-[(R)-S(8)-succinyldihydrolipoyl]-L-lysyl-[protein] + CO2. Its function is as follows. The 2-oxoglutarate dehydrogenase complex catalyzes the overall conversion of 2-oxoglutarate to succinyl-CoA and CO(2). It contains multiple copies of three enzymatic components: 2-oxoglutarate dehydrogenase (E1), dihydrolipoamide succinyltransferase (E2) and lipoamide dehydrogenase (E3). This Caenorhabditis elegans protein is 2-oxoglutarate dehydrogenase, mitochondrial (ogdh-1).